The sequence spans 38 residues: Large ribosomal subunit protein bL36B (38 aa).

The protein belongs to the bacterial ribosomal protein bL36 family.

The sequence is that of Large ribosomal subunit protein bL36B from Prochlorococcus marinus (strain MIT 9515).